A 153-amino-acid chain; its full sequence is ORM1-like protein 3 (153 aa).

The interval 1-17 (MNVGTAHSEVNPNTRVM) is important for ceramide level-sensing. Residues 1–21 (MNVGTAHSEVNPNTRVMNSRG) are Cytoplasmic-facing. Transmembrane regions (helical) follow at residues 22–42 (IWLS…SIPF) and 43–63 (VSVP…MYIF). The Cytoplasmic segment spans residues 64–94 (LHTVKGTPFETPDQGKARLLTHWEQMDYGVQ). The helical transmembrane segment at 95-117 (FTASRKFLTITPIVLYFLTSFYT) threads the bilayer. Residues 118-121 (KYDQ) are Extracellular-facing. Residues 122–142 (IHFVLNTVSLMSVLIPKLPQL) form a helical membrane-spanning segment. Residue P137 is modified to Hydroxyproline. At 143-153 (HGVRIFGINKY) the chain is on the cytoplasmic side.

It belongs to the ORM family. Ceramide-sensitive subunit of the serine palmitoyltransferase (SPT) complex, which is also composed of SPTLC1, SPTLC2/3 and SPTSSA/B. In terms of processing, when hydroxylated at Pro-137, ubiquitinated via 'Lys-48'-linkage, leading to proteasomal degradation. In endothelial cells, ORMDL3 proteasomal degradation is controlled by the sphingosine 1-phosphate receptor signaling pathway.

It localises to the endoplasmic reticulum membrane. In terms of biological role, plays an essential role in the homeostatic regulation of sphingolipid de novo biosynthesis by modulating the activity of the serine palmitoyltransferase (SPT) in response to ceramide levels. When complexed to SPT, the binding of ceramides to its N-terminus stabilizes a conformation that block SPT substrate entry, hence preventing SPT catalytic activity. Through this mechanism, maintains ceramide levels at sufficient concentrations for the production of complex sphingolipids, but which prevents the accumulation of ceramides to levels that trigger apoptosis. The sequence is that of ORM1-like protein 3 (ORMDL3) from Ailuropoda melanoleuca (Giant panda).